A 264-amino-acid polypeptide reads, in one-letter code: MFVPCGESVPDLTNFTLLMPAVSVGNVGQLAIDLIISTLNMCKIGYFYTDCLVPMVGNNPYATEEENSNELSINTEVYSLPSKKLVVLQLRSIFIKYKSKSFCEKLLAWVESSGCARIIVLSSSHSYHRNDAQLRSTPFRYLLTPCLQKSVQNKIKSLNWLEMEKSRCIPEMSDSEFCIRIPGGGITKTLYDESCSKEIQMAVLLKFVSEGDNIPDAVSLVEYLNEWLQIIKPCNDGPMASALPWKIPSSWRLLFGSGLPPALF.

The residue at position 137 (Thr-137) is a Phosphothreonine.

Belongs to the PSMG2 family. In terms of assembly, forms a heterodimer with PSMG1. The PSMG1-PSMG2 heterodimer interacts directly with the PSMA5 and PSMA7 proteasome alpha subunits. Post-translationally, degraded by the proteasome upon completion of 20S proteasome maturation.

The protein localises to the nucleus. Its function is as follows. Chaperone protein which promotes assembly of the 20S proteasome as part of a heterodimer with PSMG1. The PSMG1-PSMG2 heterodimer binds to the PSMA5 and PSMA7 proteasome subunits, promotes assembly of the proteasome alpha subunits into the heteroheptameric alpha ring and prevents alpha ring dimerization. In Mus musculus (Mouse), this protein is Proteasome assembly chaperone 2.